Consider the following 153-residue polypeptide: Putative pre-16S rRNA nuclease (153 aa).

This sequence belongs to the YqgF nuclease family.

Its subcellular location is the cytoplasm. Its function is as follows. Could be a nuclease involved in processing of the 5'-end of pre-16S rRNA. The chain is Putative pre-16S rRNA nuclease from Prochlorococcus marinus (strain SARG / CCMP1375 / SS120).